The sequence spans 790 residues: Ribonucleoside-diphosphate reductase large subunit (790 aa).

Substrate contacts are provided by residues Thr208, 223 to 224 (SC), Gly254, 436 to 440 (NLCTE), and 621 to 625 (PTVSS). Cys224 and Cys453 are oxidised to a cystine. The active-site Proton acceptor is the Asn436. The Cysteine radical intermediate role is filled by Cys438. Catalysis depends on Glu440, which acts as the Proton acceptor.

The protein belongs to the ribonucleoside diphosphate reductase large chain family. Heterotetramer composed of a homodimer of the large subunit (R1) and a homodimer of the small subunit (R2). Larger multisubunit protein complex are also active, composed of (R1)n(R2)n.

It catalyses the reaction a 2'-deoxyribonucleoside 5'-diphosphate + [thioredoxin]-disulfide + H2O = a ribonucleoside 5'-diphosphate + [thioredoxin]-dithiol. In terms of biological role, ribonucleoside-diphosphate reductase holoenzyme provides the precursors necessary for viral DNA synthesis. Allows virus growth in non-dividing cells, as well as reactivation from latency in infected hosts. Catalyzes the biosynthesis of deoxyribonucleotides from the corresponding ribonucleotides. The protein is Ribonucleoside-diphosphate reductase large subunit of Equus caballus (Horse).